Here is a 526-residue protein sequence, read N- to C-terminus: Rho guanine nucleotide exchange factor 3 (526 aa).

A disordered region spans residues 20-40; sequence ELPPASGPAKDAEEPSNKRVK. 2 positions are modified to phosphoserine: Ser47 and Ser70. The region spanning 122-304 is the DH domain; sequence KRQEAIFELS…QGIVAEINTK (183 aa). In terms of domain architecture, PH spans 291-449; the sequence is INIIQGIVAE…WLNCIRQAKE (159 aa). The segment at 464–526 is disordered; it reads EGSFLNPTTG…GNSRHGESNV (63 aa). Polar residues predominate over residues 466–475; the sequence is SFLNPTTGSR.

As to quaternary structure, interacts with RHOA and RHOB.

It localises to the cytoplasm. Functionally, acts as a guanine nucleotide exchange factor (GEF) for RhoA and RhoB GTPases. In Pongo abelii (Sumatran orangutan), this protein is Rho guanine nucleotide exchange factor 3 (ARHGEF3).